The chain runs to 214 residues: Small ribosomal subunit protein uS3 (214 aa).

The 69-residue stretch at 39-107 (IRAYLLKKPA…EVWVAVEEVK (69 aa)) folds into the KH type-2 domain.

It belongs to the universal ribosomal protein uS3 family. In terms of assembly, part of the 30S ribosomal subunit. Forms a tight complex with proteins S10 and S14.

Binds the lower part of the 30S subunit head. Binds mRNA in the 70S ribosome, positioning it for translation. The chain is Small ribosomal subunit protein uS3 from Protochlamydia amoebophila (strain UWE25).